Reading from the N-terminus, the 591-residue chain is Aspartate--tRNA ligase (591 aa).

Residue Glu171 participates in L-aspartate binding. The tract at residues 195–198 (QLFK) is aspartate. L-aspartate is bound at residue Arg217. ATP-binding positions include 217 to 219 (RDE) and Gln226. His448 is an L-aspartate binding site. Glu482 lines the ATP pocket. Position 489 (Arg489) interacts with L-aspartate. 534-537 (GLDR) contacts ATP.

Belongs to the class-II aminoacyl-tRNA synthetase family. Type 1 subfamily. As to quaternary structure, homodimer.

The protein resides in the cytoplasm. The enzyme catalyses tRNA(Asp) + L-aspartate + ATP = L-aspartyl-tRNA(Asp) + AMP + diphosphate. Its function is as follows. Catalyzes the attachment of L-aspartate to tRNA(Asp) in a two-step reaction: L-aspartate is first activated by ATP to form Asp-AMP and then transferred to the acceptor end of tRNA(Asp). This chain is Aspartate--tRNA ligase, found in Aliivibrio fischeri (strain MJ11) (Vibrio fischeri).